The chain runs to 239 residues: MAKLGLNVDHIATVRQARGGSEPDPVTAAAIGELAGAEGITIHLREDRRHIQDRDLEILRRTVQTKLNLEMAATDEMVGIACRIRPEQCTLVPEKRQELTTEGGLDVLGNLAGITRATSSLREAGIVVSLFVDPTVEQIRASKESGADAIEIHTGRYAEARSEKSRHHELAAIREAIRLGNELGLTVHAGHGLNYVNILPLTGLAGIEEFNIGHSIISRAMLVGLDRAVREMVTLIRRP.

Asn7 provides a ligand contact to 3-amino-2-oxopropyl phosphate. 9 to 10 (DH) is a 1-deoxy-D-xylulose 5-phosphate binding site. Arg18 lines the 3-amino-2-oxopropyl phosphate pocket. The Proton acceptor role is filled by His43. 2 residues coordinate 1-deoxy-D-xylulose 5-phosphate: Arg45 and His50. Glu70 (proton acceptor) is an active-site residue. Thr100 provides a ligand contact to 1-deoxy-D-xylulose 5-phosphate. His191 functions as the Proton donor in the catalytic mechanism. Residues Gly192 and 213–214 (GH) each bind 3-amino-2-oxopropyl phosphate.

The protein belongs to the PNP synthase family. As to quaternary structure, homooctamer; tetramer of dimers.

The protein localises to the cytoplasm. The enzyme catalyses 3-amino-2-oxopropyl phosphate + 1-deoxy-D-xylulose 5-phosphate = pyridoxine 5'-phosphate + phosphate + 2 H2O + H(+). It functions in the pathway cofactor biosynthesis; pyridoxine 5'-phosphate biosynthesis; pyridoxine 5'-phosphate from D-erythrose 4-phosphate: step 5/5. In terms of biological role, catalyzes the complicated ring closure reaction between the two acyclic compounds 1-deoxy-D-xylulose-5-phosphate (DXP) and 3-amino-2-oxopropyl phosphate (1-amino-acetone-3-phosphate or AAP) to form pyridoxine 5'-phosphate (PNP) and inorganic phosphate. The polypeptide is Pyridoxine 5'-phosphate synthase (Trichlorobacter lovleyi (strain ATCC BAA-1151 / DSM 17278 / SZ) (Geobacter lovleyi)).